The chain runs to 323 residues: Aldo-keto reductase family 1 member C3 (323 aa).

NADP(+) contacts are provided by residues threonine 23–tyrosine 24 and aspartate 50. Catalysis depends on tyrosine 55, which acts as the Proton donor. Substrate is bound at residue histidine 117. Residues serine 166–asparagine 167, glutamine 190, tyrosine 216–glutamine 222, lysine 270–tyrosine 272, and arginine 276–asparagine 280 contribute to the NADP(+) site.

This sequence belongs to the aldo/keto reductase family. In terms of tissue distribution, expressed in many tissues including adrenal gland, brain, kidney, liver, lung, mammary gland, placenta, small intestine, colon, spleen, prostate and testis. High expression in prostate and mammary gland. In the prostate, higher levels in epithelial cells than in stromal cells. In the brain, expressed in medulla, spinal cord, frontotemporal lobes, thalamus, subthalamic nuclei and amygdala. Weaker expression in the hippocampus, substantia nigra and caudate.

It localises to the cytoplasm. The catalysed reaction is a 3alpha-hydroxysteroid + NADP(+) = a 3-oxosteroid + NADPH + H(+). The enzyme catalyses a 3alpha-hydroxysteroid + NAD(+) = a 3-oxosteroid + NADH + H(+). It carries out the reaction prostaglandin F2alpha + NADP(+) = prostaglandin D2 + NADPH + H(+). It catalyses the reaction prostaglandin F2alpha + NADP(+) = prostaglandin H2 + NADPH + H(+). The catalysed reaction is prostaglandin D2 + NADPH + H(+) = 11beta-prostaglandin F2 + NADP(+). The enzyme catalyses prostaglandin D2-ethanolamide + NADPH + H(+) = 11beta-prostaglandin F2-ethanolamide + NADP(+). It carries out the reaction testosterone + NAD(+) = androst-4-ene-3,17-dione + NADH + H(+). It catalyses the reaction testosterone + NADP(+) = androst-4-ene-3,17-dione + NADPH + H(+). The catalysed reaction is 17beta-estradiol + NADP(+) = estrone + NADPH + H(+). The enzyme catalyses 17beta-estradiol + NAD(+) = estrone + NADH + H(+). It carries out the reaction (20S)-hydroxypregn-4-en-3-one + NADP(+) = progesterone + NADPH + H(+). It catalyses the reaction (20S)-hydroxypregn-4-en-3-one + NAD(+) = progesterone + NADH + H(+). The catalysed reaction is 5alpha-androstane-3alpha,17beta-diol + NADP(+) = 17beta-hydroxy-5alpha-androstan-3-one + NADPH + H(+). The enzyme catalyses 5alpha-androstane-3alpha,17beta-diol + NAD(+) = 17beta-hydroxy-5alpha-androstan-3-one + NADH + H(+). It carries out the reaction androsterone + NADPH + H(+) = 5alpha-androstane-3alpha,17beta-diol + NADP(+). It catalyses the reaction 5alpha-androstane-3alpha,17beta-diol + NAD(+) = androsterone + NADH + H(+). The catalysed reaction is 5alpha-androstane-3beta,17beta-diol + NADP(+) = 17beta-hydroxy-5alpha-androstan-3-one + NADPH + H(+). The enzyme catalyses 9-cis-retinol + NADP(+) = 9-cis-retinal + NADPH + H(+). It functions in the pathway steroid metabolism. With respect to regulation, strongly inhibited by nonsteroidal anti-inflammatory drugs (NSAID) including flufenamic acid and indomethacin. Also inhibited by the flavinoid, rutin, and by selective serotonin inhibitors (SSRIs). The oxidation reaction is inhibited by low micromolar concentrations of NADPH. Its function is as follows. Cytosolic aldo-keto reductase that catalyzes the NADH and NADPH-dependent reduction of ketosteroids to hydroxysteroids. Acts as a NAD(P)(H)-dependent 3-, 17- and 20-ketosteroid reductase on the steroid nucleus and side chain and regulates the metabolism of androgens, estrogens and progesterone. Displays the ability to catalyze both oxidation and reduction in vitro, but most probably acts as a reductase in vivo since the oxidase activity measured in vitro is inhibited by physiological concentration of NADPH. Acts preferentially as a 17-ketosteroid reductase and has the highest catalytic efficiency of the AKR1C enzyme for the reduction of delta4-androstenedione to form testosterone. Reduces prostaglandin (PG) D2 to 11beta-prostaglandin F2, progesterone to 20alpha-hydroxyprogesterone and estrone to 17beta-estradiol. Catalyzes the transformation of the potent androgen dihydrotestosterone (DHT) into the less active form, 5-alpha-androstan-3-alpha,17-beta-diol (3-alpha-diol). Also displays retinaldehyde reductase activity toward 9-cis-retinal. This Homo sapiens (Human) protein is Aldo-keto reductase family 1 member C3 (AKR1C3).